The chain runs to 235 residues: uncharacterized protein (235 aa).

Disordered regions lie at residues 20-64 and 140-164; these read IHPN…LPIK and SQFF…NFDQ. Low complexity-rich tracts occupy residues 30-60 and 140-161; these read NNNN…SNNN and SQFF…NNKN. Positions 174–213 form a coiled coil; sequence KYMEFLSDIEQLNSDLKESKDNLESISIEMVLLETRLKGL.

This is an uncharacterized protein from Dictyostelium discoideum (Social amoeba).